The chain runs to 936 residues: 2-oxoglutarate dehydrogenase E1 component (936 aa).

The protein belongs to the alpha-ketoglutarate dehydrogenase family. Homodimer. Part of the 2-oxoglutarate dehydrogenase (OGDH) complex composed of E1 (2-oxoglutarate dehydrogenase), E2 (dihydrolipoamide succinyltransferase) and E3 (dihydrolipoamide dehydrogenase); the complex contains multiple copies of the three enzymatic components (E1, E2 and E3). The cofactor is thiamine diphosphate.

The enzyme catalyses N(6)-[(R)-lipoyl]-L-lysyl-[protein] + 2-oxoglutarate + H(+) = N(6)-[(R)-S(8)-succinyldihydrolipoyl]-L-lysyl-[protein] + CO2. E1 component of the 2-oxoglutarate dehydrogenase (OGDH) complex which catalyzes the decarboxylation of 2-oxoglutarate, the first step in the conversion of 2-oxoglutarate to succinyl-CoA and CO(2). The chain is 2-oxoglutarate dehydrogenase E1 component (sucA) from Rickettsia prowazekii (strain Madrid E).